The primary structure comprises 141 residues: Hemoglobin subunit alpha (141 aa).

A Globin domain is found at 1-141 (VLSPADKANI…VSTVLTSKYR (141 aa)). The residue at position 3 (Ser-3) is a Phosphoserine. N6-succinyllysine is present on residues Lys-7 and Lys-11. An N6-acetyllysine; alternate modification is found at Lys-16. At Lys-16 the chain carries N6-succinyllysine; alternate. Phosphotyrosine is present on Tyr-24. Residue Ser-35 is modified to Phosphoserine. Lys-40 is subject to N6-succinyllysine. Ser-49 carries the post-translational modification Phosphoserine. Residue His-58 participates in O2 binding. His-87 is a binding site for heme b. Ser-102 carries the post-translational modification Phosphoserine. Thr-108 is modified (phosphothreonine). Residues Ser-124 and Ser-131 each carry the phosphoserine modification. A phosphothreonine mark is found at Thr-134 and Thr-137. Phosphoserine is present on Ser-138.

The protein belongs to the globin family. Heterotetramer of two alpha chains and two beta chains. In terms of tissue distribution, red blood cells.

Involved in oxygen transport from the lung to the various peripheral tissues. In terms of biological role, hemopressin acts as an antagonist peptide of the cannabinoid receptor CNR1. Hemopressin-binding efficiently blocks cannabinoid receptor CNR1 and subsequent signaling. This is Hemoglobin subunit alpha (HBA) from Meles meles (Eurasian badger).